Reading from the N-terminus, the 45-residue chain is Phospholipase A2 3 (45 aa).

Ca(2+)-binding residues include Tyr20, Gly24, and Gly25. An intrachain disulfide couples Cys21 to Cys36. His39 is an active-site residue. Asp40 contacts Ca(2+).

It depends on Ca(2+) as a cofactor. Expressed by the venom gland.

The protein resides in the secreted. It carries out the reaction a 1,2-diacyl-sn-glycero-3-phosphocholine + H2O = a 1-acyl-sn-glycero-3-phosphocholine + a fatty acid + H(+). PLA2 catalyzes the calcium-dependent hydrolysis of the 2-acyl groups in 3-sn-phosphoglycerides. In Bothrops diporus (Chaco lancehead), this protein is Phospholipase A2 3.